Here is a 441-residue protein sequence, read N- to C-terminus: MRLSQYFLPILKENPKEAEIISHCLMLRAGIIRQQTSGIYSWLPLGKKVLDKVCTIIREEQERAGALEISMPTIQSADLWRESGRYDDYGLEMLRIKDRQERDLLYGPTNEEMVTDIFRSYVRSYKDLPLNLYQIQWKFRDEIRPRFGVMRSREFLMKDGYSFDLDYESAKTSYNRMFIAYLRTFSRIGLKVIPMRADTGPIGGELSHEFIILAKTGESAVFCDKRFLEMTAPPVSVDFTDNVVLTDIVKQWTALYATTEEMHNAEEWAQICKSNQLSARGIEVGHIFYFGTKYSEPMGAKVMGRDGKEYPVFMGSYGIGPSRLVAAAIEASHDENGIIWPKPITPFDFGIINTKSDNAKCYGMCETLYQGLVNAGFDPLLDDRNERPGAKFATMDLIGLPTQIIVGPKSAAQDEVEIKDRKTGTKEVLTVEAALNRLSAM.

Belongs to the class-II aminoacyl-tRNA synthetase family. ProS type 2 subfamily. In terms of assembly, homodimer.

The protein resides in the cytoplasm. It catalyses the reaction tRNA(Pro) + L-proline + ATP = L-prolyl-tRNA(Pro) + AMP + diphosphate. Catalyzes the attachment of proline to tRNA(Pro) in a two-step reaction: proline is first activated by ATP to form Pro-AMP and then transferred to the acceptor end of tRNA(Pro). The chain is Proline--tRNA ligase from Bartonella bacilliformis (strain ATCC 35685 / KC583 / Herrer 020/F12,63).